The primary structure comprises 396 residues: tRNA(Met) cytidine acetate ligase (396 aa).

ATP-binding positions include 9–22, Gly-103, Asn-154, and Arg-179; that span reads IVEYNPFHNGHLHH.

It belongs to the TmcAL family.

It is found in the cytoplasm. It catalyses the reaction cytidine(34) in elongator tRNA(Met) + acetate + ATP = N(4)-acetylcytidine(34) in elongator tRNA(Met) + AMP + diphosphate. In terms of biological role, catalyzes the formation of N(4)-acetylcytidine (ac(4)C) at the wobble position of elongator tRNA(Met), using acetate and ATP as substrates. First activates an acetate ion to form acetyladenylate (Ac-AMP) and then transfers the acetyl group to tRNA to form ac(4)C34. This chain is tRNA(Met) cytidine acetate ligase, found in Fusobacterium nucleatum subsp. nucleatum (strain ATCC 25586 / DSM 15643 / BCRC 10681 / CIP 101130 / JCM 8532 / KCTC 2640 / LMG 13131 / VPI 4355).